Here is a 60-residue protein sequence, read N- to C-terminus: Probable tautomerase SP_1017 (60 aa).

The active-site Proton acceptor; via imino nitrogen is the Pro2.

This sequence belongs to the 4-oxalocrotonate tautomerase family.

This chain is Probable tautomerase SP_1017, found in Streptococcus pneumoniae serotype 4 (strain ATCC BAA-334 / TIGR4).